The following is a 401-amino-acid chain: Argininosuccinate synthase (401 aa).

8–16 (AYSGGLDTS) serves as a coordination point for ATP. Y87 contacts L-citrulline. Residue G117 coordinates ATP. Positions 119, 123, and 124 each coordinate L-aspartate. Residue N123 participates in L-citrulline binding. L-citrulline-binding residues include R127, S175, E259, and Y271.

It belongs to the argininosuccinate synthase family. Type 1 subfamily. In terms of assembly, homotetramer.

Its subcellular location is the cytoplasm. It catalyses the reaction L-citrulline + L-aspartate + ATP = 2-(N(omega)-L-arginino)succinate + AMP + diphosphate + H(+). Its pathway is amino-acid biosynthesis; L-arginine biosynthesis; L-arginine from L-ornithine and carbamoyl phosphate: step 2/3. The protein is Argininosuccinate synthase of Corynebacterium efficiens (strain DSM 44549 / YS-314 / AJ 12310 / JCM 11189 / NBRC 100395).